The primary structure comprises 145 residues: Large ribosomal subunit protein uL11 (145 aa).

Belongs to the universal ribosomal protein uL11 family. As to quaternary structure, part of the ribosomal stalk of the 50S ribosomal subunit. Interacts with L10 and the large rRNA to form the base of the stalk. L10 forms an elongated spine to which L12 dimers bind in a sequential fashion forming a multimeric L10(L12)X complex. In terms of processing, one or more lysine residues are methylated.

Functionally, forms part of the ribosomal stalk which helps the ribosome interact with GTP-bound translation factors. This Rickettsia canadensis (strain McKiel) protein is Large ribosomal subunit protein uL11.